The primary structure comprises 331 residues: Ketol-acid reductoisomerase (NADP(+)) (331 aa).

Residues 2–182 (ARMYYDEDAN…GGTRAGVLET (181 aa)) form the KARI N-terminal Rossmann domain. Residues 25–28 (YGSQ), serine 51, serine 53, and 83–86 (DEVQ) contribute to the NADP(+) site. Histidine 108 is a catalytic residue. Residue glycine 134 participates in NADP(+) binding. A KARI C-terminal knotted domain is found at 183 to 328 (TFREETETDL…KDLRAMFSWL (146 aa)). Aspartate 191, glutamate 195, glutamate 227, and glutamate 231 together coordinate Mg(2+). A substrate-binding site is contributed by serine 252.

It belongs to the ketol-acid reductoisomerase family. Mg(2+) serves as cofactor.

The enzyme catalyses (2R)-2,3-dihydroxy-3-methylbutanoate + NADP(+) = (2S)-2-acetolactate + NADPH + H(+). It carries out the reaction (2R,3R)-2,3-dihydroxy-3-methylpentanoate + NADP(+) = (S)-2-ethyl-2-hydroxy-3-oxobutanoate + NADPH + H(+). It functions in the pathway amino-acid biosynthesis; L-isoleucine biosynthesis; L-isoleucine from 2-oxobutanoate: step 2/4. Its pathway is amino-acid biosynthesis; L-valine biosynthesis; L-valine from pyruvate: step 2/4. Its function is as follows. Involved in the biosynthesis of branched-chain amino acids (BCAA). Catalyzes an alkyl-migration followed by a ketol-acid reduction of (S)-2-acetolactate (S2AL) to yield (R)-2,3-dihydroxy-isovalerate. In the isomerase reaction, S2AL is rearranged via a Mg-dependent methyl migration to produce 3-hydroxy-3-methyl-2-ketobutyrate (HMKB). In the reductase reaction, this 2-ketoacid undergoes a metal-dependent reduction by NADPH to yield (R)-2,3-dihydroxy-isovalerate. This is Ketol-acid reductoisomerase (NADP(+)) from Nostoc punctiforme (strain ATCC 29133 / PCC 73102).